We begin with the raw amino-acid sequence, 80 residues long: UPF0125 protein PD_1376 (80 aa).

Belongs to the UPF0125 (RnfH) family.

The chain is UPF0125 protein PD_1376 from Xylella fastidiosa (strain Temecula1 / ATCC 700964).